The following is a 379-amino-acid chain: GPN-loop GTPase QQT2 (379 aa).

M1 carries the N-acetylmethionine modification. 51-56 provides a ligand contact to GTP; sequence GSGKTS. Positions 108–110 match the Gly-Pro-Asn (GPN)-loop; involved in dimer interface motif; that stretch reads GPN. Residues 211–214 and A267 each bind GTP; that span reads NKTD. Positions 288-322 form a coiled coil; sequence METYKADLDMRKADKERLEEERKKHEMEKLRKDME. Basic and acidic residues-rich tracts occupy residues 303 to 322 and 335 to 346; these read ERLE…KDME and LKDRDATEKMML. Positions 303 to 379 are disordered; that stretch reads ERLEEERKKH…EDDETKHYYL (77 aa). The segment covering 347–372 has biased composition (acidic residues); it reads EEDDEDFQVEDEEDSDDAIDEDDEDD.

Belongs to the GPN-loop GTPase family. Heterodimer with QQT1. As to expression, expressed in individual cells of roots, leaves and flowers.

It is found in the cytoplasm. Its subcellular location is the nucleus. It localises to the cytoskeleton. The protein localises to the spindle. The protein resides in the phragmoplast. Small GTPase that is essential for the correct formation of the tangential divisions in early embryos. Associates with microtubule during mitosis and may function in the positioning of the division plane. May participate in the patterning of the early embryo at the octant-dermatogen transition. The polypeptide is GPN-loop GTPase QQT2 (Arabidopsis thaliana (Mouse-ear cress)).